Consider the following 113-residue polypeptide: Putative pterin-4-alpha-carbinolamine dehydratase (113 aa).

It belongs to the pterin-4-alpha-carbinolamine dehydratase family.

It catalyses the reaction (4aS,6R)-4a-hydroxy-L-erythro-5,6,7,8-tetrahydrobiopterin = (6R)-L-erythro-6,7-dihydrobiopterin + H2O. The polypeptide is Putative pterin-4-alpha-carbinolamine dehydratase (Pelodictyon phaeoclathratiforme (strain DSM 5477 / BU-1)).